A 360-amino-acid polypeptide reads, in one-letter code: S-adenosylmethionine:tRNA ribosyltransferase-isomerase (360 aa).

It belongs to the QueA family. As to quaternary structure, monomer.

The protein resides in the cytoplasm. The enzyme catalyses 7-aminomethyl-7-carbaguanosine(34) in tRNA + S-adenosyl-L-methionine = epoxyqueuosine(34) in tRNA + adenine + L-methionine + 2 H(+). Its pathway is tRNA modification; tRNA-queuosine biosynthesis. Functionally, transfers and isomerizes the ribose moiety from AdoMet to the 7-aminomethyl group of 7-deazaguanine (preQ1-tRNA) to give epoxyqueuosine (oQ-tRNA). The protein is S-adenosylmethionine:tRNA ribosyltransferase-isomerase of Rhodopseudomonas palustris (strain ATCC BAA-98 / CGA009).